Consider the following 535-residue polypeptide: T-complex protein 1 subunit zeta 2 (535 aa).

Belongs to the TCP-1 chaperonin family. Heterooligomeric complex of about 850 to 900 kDa that forms two stacked rings, 12 to 16 nm in diameter.

Its subcellular location is the cytoplasm. Its function is as follows. Molecular chaperone; assists the folding of proteins upon ATP hydrolysis. Known to play a role, in vitro, in the folding of actin and tubulin. This Arabidopsis thaliana (Mouse-ear cress) protein is T-complex protein 1 subunit zeta 2.